Consider the following 983-residue polypeptide: Anion exchange protein 4 (983 aa).

The disordered stretch occupies residues 1-48 (MEMKLPGQEGFEASSAPRNIPSGELDSNPDPGTGPSPDGPSDTESKEL). The N-linked (GlcNAc...) asparagine glycan is linked to asparagine 183. Disordered stretches follow at residues 186–205 (TGTR…DNEE) and 332–357 (RIPP…RGPA). The next 4 helical transmembrane spans lie at 415-435 (AVLY…GLLG), 443-463 (GVLE…LMAG), 500-520 (VGIW…SVLV), and 530-550 (GFCA…MLNL). The tract at residues 415-983 (AVLYIYLATV…KAPEINISVN (569 aa)) is membrane (anion exchange). 2 N-linked (GlcNAc...) asparagine glycosylation sites follow: asparagine 576 and asparagine 600. 7 helical membrane passes run 624–644 (VPDI…FAMA), 665–685 (FSSV…GLAT), 712–732 (PWWW…LIFM), 758–778 (LFCV…WYVS), 815–835 (GLVV…LKFI), 837–857 (MPVL…SIQF), and 899–919 (LWII…LGLV). Residues 946–957 (RSIPEKGLEPEH) are compositionally biased toward basic and acidic residues. The interval 946–983 (RSIPEKGLEPEHSFSGSDSEDSELMYQPKAPEINISVN) is disordered. Asparagine 979 is a glycosylation site (N-linked (GlcNAc...) asparagine).

It belongs to the anion exchanger (TC 2.A.31) family. Kidney specific.

It is found in the basolateral cell membrane. It catalyses the reaction 2 hydrogencarbonate(out) + chloride(in) + Na(+)(out) = 2 hydrogencarbonate(in) + chloride(out) + Na(+)(in). The enzyme catalyses K(+)(in) + 2 hydrogencarbonate(in) + chloride(out) = K(+)(out) + 2 hydrogencarbonate(out) + chloride(in). It carries out the reaction Li(+)(in) + 2 hydrogencarbonate(in) + chloride(out) = Li(+)(out) + 2 hydrogencarbonate(out) + chloride(in). The catalysed reaction is Rb(+)(in) + 2 hydrogencarbonate(in) + chloride(out) = Rb(+)(out) + 2 hydrogencarbonate(out) + chloride(in). It catalyses the reaction Cs(+)(in) + 2 hydrogencarbonate(in) + chloride(out) = Cs(+)(out) + 2 hydrogencarbonate(out) + chloride(in). In terms of biological role, electroneutral Cl(-)/HCO3(-) antiporter that favors chloride ion entry and efflux of hydrogencarbonate and sodium ion across the basolateral membrane and may participate in salivary secretion. Also mediates Cl(-)/HCO3(-) exchange activity in the presence of K(+) as well as Cs(+), Li(+), and Rb(+). Does not contribute to Cl(-)/HCO3(-) exchanger in the apical membrane of the upper villous epithelium. In Homo sapiens (Human), this protein is Anion exchange protein 4.